Here is a 726-residue protein sequence, read N- to C-terminus: MEGERKNNNKRWYFTREQLENSPSRRFGVDPDKELSYRQQAANLLQDMGQRLNVSQLTINTAIVYMHRFYMIQSFTQFPGNSVAPAALFLAAKVEEQPKKLEHVIKVAHTCLHPQESLPDTRSEAYLQQVQDLVILESIILQTLGFELTIDHPHTHVVKCTQLVRASKDLAQTSYFMATNSLHLTTFSLQYTPPVVACVCIHLACKWSNWEIPVSTDGKHWWEYVDATVTLELLDELTHEFLQILEKTPNRLKRIWNWRACEAAKKTKADDRGTDEKTSEQTILNMISQSSSDTTIAGLMSMSTSTTSAVPSLPVSEESSSNLTSVEMLPGKRWLSSQPSFKLEPTQGHRTSENLALTGVDHSLPQDGSNAFISQKQNSKSVPSAKVSLKEYRAKHAEELAAQKRQLENMEANVKSQYAYAAQNLLSHHDSHSSVILKMPIEGSENPERPFLEKADKTALKMRIPVAGGDKAASSKPEEIKMRIKVHAAADKHNSVEDSVTKSREHKEKHKTHPSNHHHHHNHHSHKHSHSQLPVGTGNKRPGDPKHSSQTSNLAHKTYSLSSSFSSSSSTRKRGPSEETGGAVFDHPAKIAKSTKSSSLNFSFPSLPTMGQMPGHSSDTSGLSFSQPSCKTRVPHSKLDKGPTGANGHNTTQTIDYQDTVNMLHSLLSAQGVQPTQPTAFEFVRPYSDYLNPRSGGISSRSGNTDKPRPPPLPSEPPPPLPPLPK.

A Phosphoserine modification is found at S117. Positions 253–270 match the Nuclear localization signal, and interaction with Tat-TAR RNA motif; the sequence is KRIWNWRACEAAKKTKAD. S340 bears the Phosphoserine mark. K342 is covalently cross-linked (Glycyl lysine isopeptide (Lys-Gly) (interchain with G-Cter in SUMO2)). Positions 360–385 are disordered; the sequence is VDHSLPQDGSNAFISQKQNSKSVPSA. A compositionally biased stretch (polar residues) spans 366–382; that stretch reads QDGSNAFISQKQNSKSV. Residues 384 to 425 are a coiled coil; it reads SAKVSLKEYRAKHAEELAAQKRQLENMEANVKSQYAYAAQNL. S388 carries the post-translational modification Phosphoserine. K390 is subject to N6-acetyllysine. K415 is covalently cross-linked (Glycyl lysine isopeptide (Lys-Gly) (interchain with G-Cter in SUMO2)). 3 positions are modified to ADP-ribosylserine: S416, S474, and S475. A histidine-rich domain (HRD) region spans residues 480–550; sequence IKMRIKVHAA…RPGDPKHSSQ (71 aa). A Glycyl lysine isopeptide (Lys-Gly) (interchain with G-Cter in SUMO2) cross-link involves residue K481. K485 is subject to N6-(ADP-ribosyl)lysine. H487 carries the ADP-ribosylhistidine modification. Residues 487-506 are compositionally biased toward basic and acidic residues; the sequence is HAAADKHNSVEDSVTKSREH. Disordered stretches follow at residues 487 to 650 and 688 to 726; these read HAAA…NGHN and SDYL…PLPK. S495 and S499 each carry phosphoserine. The segment covering 507–530 has biased composition (basic residues); it reads KEKHKTHPSNHHHHHNHHSHKHSH. The required for interaction with ZMYND8 stretch occupies residues 527-570; sequence KHSHSQLPVGTGNKRPGDPKHSSQTSNLAHKTYSLSSSFSSSSS. Residue H530 is modified to ADP-ribosylhistidine. S531, S549, and S552 each carry ADP-ribosylserine. Position 556 is an ADP-ribosylhistidine (H556). The segment covering 560 to 570 has biased composition (low complexity); that stretch reads SLSSSFSSSSS. Residue S563 is modified to ADP-ribosylserine. A phosphoserine mark is found at S564 and S577. Low complexity predominate over residues 594-609; sequence STKSSSLNFSFPSLPT. Residues 615-630 are compositionally biased toward polar residues; sequence GHSSDTSGLSFSQPSC. S637 is modified (ADP-ribosylserine). A compositionally biased stretch (pro residues) spans 710-726; it reads PPPLPSEPPPPLPPLPK.

Belongs to the cyclin family. Cyclin C subfamily. As to quaternary structure, cyclin-T1 is the predominant cyclin that associates with CDK9 to form a heterodimer called P-TEFb. P-TEFb forms a complex with AFF4/AF5Q31. Component of a complex which is at least composed of HTATSF1/Tat-SF1, P-TEFb complex, RNA pol II, SUPT5H, and NCL/nucleolin. Component of the 7SK snRNP complex at least composed of P-TEFb (composed of CDK9 and CCNT1/cyclin-T1), HEXIM1, HEXIM2, BCDIN3, SART3 proteins and 7SK and U6 snRNAs. Interacts (via central region) with ZMYND8 (via N-terminus); the interaction is direct and the association appears to occur between homodimeric ZMYND8 and the activated form of the P-TEFb complex. Interacts with BRD4, targets chromatin binding. Interacts with JMJD6. Interacts with MDFIC. Interacts with HSF1. Interacts with HTATSF1. Interacts with TBX21. In terms of assembly, (Microbial infection) Interacts with the transactivation region of HIV-1, HIV-2 and SIV Tat. (Microbial infection) Interacts with human herpes virus 1 (HHV-1) transcriptional regulator ICP22. Post-translationally, ADP-ribosylation on serine residues by PARP1 in response to DNA damage disrupts the phase separation activity of CCNT1, thereby preventing activation of CDK9. In terms of tissue distribution, ubiquitously expressed.

The protein localises to the nucleus. Regulatory subunit of the cyclin-dependent kinase pair (CDK9/cyclin-T1) complex, also called positive transcription elongation factor B (P-TEFb), which facilitates the transition from abortive to productive elongation by phosphorylating the CTD (C-terminal domain) of the large subunit of RNA polymerase II (RNA Pol II). Required to activate the protein kinase activity of CDK9: acts by mediating formation of liquid-liquid phase separation (LLPS) that enhances binding of P-TEFb to the CTD of RNA Pol II. In terms of biological role, (Microbial infection) In case of HIV or SIV infections, binds to the transactivation domain of the viral nuclear transcriptional activator, Tat, thereby increasing Tat's affinity for the transactivating response RNA element (TAR RNA). Serves as an essential cofactor for Tat, by promoting RNA Pol II activation, allowing transcription of viral genes. This chain is Cyclin-T1 (CCNT1), found in Homo sapiens (Human).